Consider the following 487-residue polypeptide: Glycogen synthase (487 aa).

K20 contributes to the ADP-alpha-D-glucose binding site.

This sequence belongs to the glycosyltransferase 1 family. Bacterial/plant glycogen synthase subfamily.

It carries out the reaction [(1-&gt;4)-alpha-D-glucosyl](n) + ADP-alpha-D-glucose = [(1-&gt;4)-alpha-D-glucosyl](n+1) + ADP + H(+). The protein operates within glycan biosynthesis; glycogen biosynthesis. Synthesizes alpha-1,4-glucan chains using ADP-glucose. The polypeptide is Glycogen synthase (Aliivibrio fischeri (strain ATCC 700601 / ES114) (Vibrio fischeri)).